A 223-amino-acid polypeptide reads, in one-letter code: Small ribosomal subunit protein uS5 (223 aa).

The segment at M1–A48 is disordered. Residues G29 to G42 are compositionally biased toward basic and acidic residues. Residues F53–V116 enclose the S5 DRBM domain.

The protein belongs to the universal ribosomal protein uS5 family. Part of the 30S ribosomal subunit. Contacts proteins S4 and S8.

In terms of biological role, with S4 and S12 plays an important role in translational accuracy. Its function is as follows. Located at the back of the 30S subunit body where it stabilizes the conformation of the head with respect to the body. The protein is Small ribosomal subunit protein uS5 of Rhodococcus erythropolis (strain PR4 / NBRC 100887).